The following is a 264-amino-acid chain: Thymidylate synthase (264 aa).

A dUMP-binding site is contributed by Arg-21. Residue His-51 participates in (6R)-5,10-methylene-5,6,7,8-tetrahydrofolate binding. 126 to 127 (RR) provides a ligand contact to dUMP. Cys-146 acts as the Nucleophile in catalysis. DUMP-binding positions include 166 to 169 (RSAD), Asn-177, and 207 to 209 (HLY). Asp-169 is a (6R)-5,10-methylene-5,6,7,8-tetrahydrofolate binding site. (6R)-5,10-methylene-5,6,7,8-tetrahydrofolate is bound at residue Ala-263.

This sequence belongs to the thymidylate synthase family. Bacterial-type ThyA subfamily. In terms of assembly, homodimer.

The protein resides in the cytoplasm. It carries out the reaction dUMP + (6R)-5,10-methylene-5,6,7,8-tetrahydrofolate = 7,8-dihydrofolate + dTMP. The protein operates within pyrimidine metabolism; dTTP biosynthesis. Functionally, catalyzes the reductive methylation of 2'-deoxyuridine-5'-monophosphate (dUMP) to 2'-deoxythymidine-5'-monophosphate (dTMP) while utilizing 5,10-methylenetetrahydrofolate (mTHF) as the methyl donor and reductant in the reaction, yielding dihydrofolate (DHF) as a by-product. This enzymatic reaction provides an intracellular de novo source of dTMP, an essential precursor for DNA biosynthesis. The protein is Thymidylate synthase of Legionella pneumophila (strain Paris).